A 143-amino-acid polypeptide reads, in one-letter code: MAKKIIGFIKLQIPAGKANPSPPVGPALGQRGLNIMEFCKAFNAQTQGMEPGLPVPVVITAFADKSFTFVMKSPPATVLIKKAAGIQKGSAKPHTDKVGKITRAQAEEIAKAKNADLTAADLDAAVRTIAGSARSMGITVEGL.

This sequence belongs to the universal ribosomal protein uL11 family. As to quaternary structure, part of the ribosomal stalk of the 50S ribosomal subunit. Interacts with L10 and the large rRNA to form the base of the stalk. L10 forms an elongated spine to which L12 dimers bind in a sequential fashion forming a multimeric L10(L12)X complex. In terms of processing, one or more lysine residues are methylated.

In terms of biological role, forms part of the ribosomal stalk which helps the ribosome interact with GTP-bound translation factors. The sequence is that of Large ribosomal subunit protein uL11 from Ralstonia pickettii (strain 12J).